The following is a 167-amino-acid chain: Photosystem I assembly protein Ycf3 (167 aa).

TPR repeat units follow at residues 35 to 68, 72 to 105, and 120 to 153; these read AFTY…EVDA, SYIF…NPSL, and GEQA…APTN.

It belongs to the Ycf3 family.

Its subcellular location is the plastid. It is found in the chloroplast thylakoid membrane. In terms of biological role, essential for the assembly of the photosystem I (PSI) complex. May act as a chaperone-like factor to guide the assembly of the PSI subunits. The polypeptide is Photosystem I assembly protein Ycf3 (Pleurastrum terricola (Filamentous green alga)).